Here is a 141-residue protein sequence, read N- to C-terminus: 4-hydroxybenzoyl-CoA thioesterase (141 aa).

D17 is an active-site residue. Substrate-binding positions include W47, 59 to 61 (TPI), and K90.

It belongs to the 4-hydroxybenzoyl-CoA thioesterase family. As to quaternary structure, homotetramer.

The catalysed reaction is 4-hydroxybenzoyl-CoA + H2O = 4-hydroxybenzoate + CoA + H(+). The protein operates within xenobiotic degradation; 4-chlorobenzoate degradation; 4-hydroxybenzoate from 4-chlorobenzoate: step 3/3. Its activity is regulated as follows. Unaffected by EDTA, Mg(2+), Mn(2+), Fe(2+), Ca(2+), Co(2+) and Zn(2+). In terms of biological role, hydrolyzes 4-hydroxybenzoate-CoA, and to a lesser extent benzoyl-CoA and 4-chlorobenzoate-CoA. Not active against aliphatic acyl-CoA thioesters, including palmitoyl-CoA, hexanoyl-CoA and acetyl-CoA. The chain is 4-hydroxybenzoyl-CoA thioesterase from Pseudomonas sp. (strain CBS-3).